Reading from the N-terminus, the 1055-residue chain is Inactive exonuclease DIS3L2 (1055 aa).

Disordered stretches follow at residues 1–109 (MKSA…SSPE) and 229–249 (SAAK…KARQ). The segment covering 17 to 32 (HKKKRNRPQKQNRRSK) has biased composition (basic residues). Over residues 39–59 (EDAHVEESLDGRDSSRSKAKD) the composition is skewed to basic and acidic residues. Residues 97-108 (PRRSASPLLSSP) show a composition bias toward low complexity. The region spanning 367–446 (YVQLMPADPR…PQINAILYQN (80 aa)) is the CSD2 domain. The 349-residue stretch at 476-824 (RKDLRDLCVL…VHRALAAALE (349 aa)) folds into the RNB domain. Residues aspartate 488 and aspartate 497 each contribute to the Mg(2+) site.

Belongs to the RNR ribonuclease family. DIS3L2 subfamily.

It localises to the cytoplasm. Its function is as follows. Probable inactive 3'-5'-exoribonuclease. Is unable to complement the growth defect of a yeast mutant lacking RRP44 exonuclease. The polypeptide is Inactive exonuclease DIS3L2 (Arabidopsis thaliana (Mouse-ear cress)).